We begin with the raw amino-acid sequence, 334 residues long: Phosphate acyltransferase (334 aa).

Belongs to the PlsX family. As to quaternary structure, homodimer. Probably interacts with PlsY.

The protein localises to the cytoplasm. The catalysed reaction is a fatty acyl-[ACP] + phosphate = an acyl phosphate + holo-[ACP]. The protein operates within lipid metabolism; phospholipid metabolism. Catalyzes the reversible formation of acyl-phosphate (acyl-PO(4)) from acyl-[acyl-carrier-protein] (acyl-ACP). This enzyme utilizes acyl-ACP as fatty acyl donor, but not acyl-CoA. The polypeptide is Phosphate acyltransferase (Thermotoga petrophila (strain ATCC BAA-488 / DSM 13995 / JCM 10881 / RKU-1)).